Consider the following 248-residue polypeptide: UDP-2,3-diacylglucosamine hydrolase (248 aa).

5 residues coordinate Mn(2+): D8, H10, D41, N79, and H114. A substrate-binding site is contributed by 79-80; the sequence is NR. The substrate site is built by D122, S160, D171, Q174, and H202. Mn(2+) is bound by residues H202 and H204.

It belongs to the LpxH family. Mn(2+) is required as a cofactor.

Its subcellular location is the cell inner membrane. It carries out the reaction UDP-2-N,3-O-bis[(3R)-3-hydroxytetradecanoyl]-alpha-D-glucosamine + H2O = 2-N,3-O-bis[(3R)-3-hydroxytetradecanoyl]-alpha-D-glucosaminyl 1-phosphate + UMP + 2 H(+). It participates in glycolipid biosynthesis; lipid IV(A) biosynthesis; lipid IV(A) from (3R)-3-hydroxytetradecanoyl-[acyl-carrier-protein] and UDP-N-acetyl-alpha-D-glucosamine: step 4/6. Hydrolyzes the pyrophosphate bond of UDP-2,3-diacylglucosamine to yield 2,3-diacylglucosamine 1-phosphate (lipid X) and UMP by catalyzing the attack of water at the alpha-P atom. Involved in the biosynthesis of lipid A, a phosphorylated glycolipid that anchors the lipopolysaccharide to the outer membrane of the cell. The chain is UDP-2,3-diacylglucosamine hydrolase from Stenotrophomonas maltophilia (strain K279a).